The primary structure comprises 521 residues: Nitric oxide reductase transcription regulator NorR2 (521 aa).

D56 is modified (4-aspartylphosphate). The region spanning 193-422 (IIGQSEAIAN…LEHVISRAAL (230 aa)) is the Sigma-54 factor interaction domain. ATP-binding positions include 221–228 (GETGVGKE) and 293–302 (EVGELPLAIQ). A DNA-binding region (H-T-H motif) is located at residues 497-516 (WAQAARQLGIDASNLHKLAR).

The protein operates within nitrogen metabolism; nitrate reduction (denitrification) [regulation]. Functionally, required for the nitric oxide (NO) induced expression of NO reductase. Not required for expression of 2 other pathway members, nitrate reductase (nirS) and nitrous oxide reductase (nosZ). This Cupriavidus necator (strain ATCC 17699 / DSM 428 / KCTC 22496 / NCIMB 10442 / H16 / Stanier 337) (Ralstonia eutropha) protein is Nitric oxide reductase transcription regulator NorR2 (norR2).